A 642-amino-acid polypeptide reads, in one-letter code: Threonine--tRNA ligase (642 aa).

In terms of domain architecture, TGS spans 1–61 (MPVIRFYDGS…REDAFIEFVD (61 aa)). The segment at 243 to 534 (DHRKIGKFLQ…LIEECSGNLP (292 aa)) is catalytic. Positions 334, 385, and 511 each coordinate Zn(2+).

It belongs to the class-II aminoacyl-tRNA synthetase family. In terms of assembly, homodimer. It depends on Zn(2+) as a cofactor.

The protein resides in the cytoplasm. The catalysed reaction is tRNA(Thr) + L-threonine + ATP = L-threonyl-tRNA(Thr) + AMP + diphosphate + H(+). Functionally, catalyzes the attachment of threonine to tRNA(Thr) in a two-step reaction: L-threonine is first activated by ATP to form Thr-AMP and then transferred to the acceptor end of tRNA(Thr). Also edits incorrectly charged L-seryl-tRNA(Thr). The polypeptide is Threonine--tRNA ligase (Buchnera aphidicola subsp. Acyrthosiphon pisum (strain APS) (Acyrthosiphon pisum symbiotic bacterium)).